The following is a 333-amino-acid chain: Nucleoid-associated protein VV1_3120 (333 aa).

The protein belongs to the YejK family.

The protein localises to the cytoplasm. The protein resides in the nucleoid. The sequence is that of Nucleoid-associated protein VV1_3120 from Vibrio vulnificus (strain CMCP6).